A 109-amino-acid chain; its full sequence is Spermidine export protein MdtI (109 aa).

4 consecutive transmembrane segments (helical) span residues 6–26 (WIHG…NVLL), 36–56 (CYGI…SQAV), 64–84 (AYAL…WVLF), and 88–108 (LNPK…MIKF).

This sequence belongs to the drug/metabolite transporter (DMT) superfamily. Small multidrug resistance (SMR) (TC 2.A.7.1) family. MdtI subfamily. Forms a complex with MdtJ.

Its subcellular location is the cell inner membrane. Catalyzes the excretion of spermidine. The chain is Spermidine export protein MdtI from Salmonella paratyphi A (strain ATCC 9150 / SARB42).